Here is a 129-residue protein sequence, read N- to C-terminus: Glycine cleavage system H protein (129 aa).

The region spanning 24–106 (LVRVGLSAYA…HGEGWLLVIR (83 aa)) is the Lipoyl-binding domain. An N6-lipoyllysine modification is found at Lys65.

It belongs to the GcvH family. The glycine cleavage system is composed of four proteins: P, T, L and H. It depends on (R)-lipoate as a cofactor.

Its function is as follows. The glycine cleavage system catalyzes the degradation of glycine. The H protein shuttles the methylamine group of glycine from the P protein to the T protein. This is Glycine cleavage system H protein from Synechococcus sp. (strain CC9311).